The chain runs to 63 residues: Large ribosomal subunit protein bL28A (63 aa).

It belongs to the bacterial ribosomal protein bL28 family.

The chain is Large ribosomal subunit protein bL28A from Nocardia farcinica (strain IFM 10152).